A 747-amino-acid polypeptide reads, in one-letter code: Photosystem I P700 chlorophyll a apoprotein A2 (747 aa).

8 helical membrane passes run 46 to 69 (LFATHFGHLAIIGLWVAGNLFHIA), 135 to 158 (LFQGAIFLNILVCWLLFAGWLHLQ), 175 to 199 (LNHHLAVLFGFSSIAWTGHLVHVAI), 273 to 291 (IAHHHLAIGVMFIIAGHMY), 341 to 364 (LHFQLGLALASLGAACSLVAQHMG), 380 to 406 (SALYTHHQYIAMFLMVGAFSHGAIFFV), 428 to 450 (ALISHLSWVTMLLGFHTLGIYVH), and 530 to 548 (FLVHHAIALGLHTTALILI). 2 residues coordinate [4Fe-4S] cluster: cysteine 572 and cysteine 581. The next 2 membrane-spanning stretches (helical) occupy residues 588-609 (ATYLAMFWALNTIAWITFYWHW) and 656-678 (LSPWAWMFLFGHLIWATGFMFLI). Positions 667, 675, and 683 each coordinate divinyl chlorophyll a. Residue tryptophan 684 coordinates phylloquinone. Residues 720–740 (LVGLTHFTVGNFVTFGAFVIA) form a helical membrane-spanning segment.

The protein belongs to the PsaA/PsaB family. The PsaA/B heterodimer binds the P700 divinyl chlorophyll special pair and subsequent electron acceptors. PSI consists of a core antenna complex that captures photons, and an electron transfer chain that converts photonic excitation into a charge separation. The cyanobacterial PSI reaction center is composed of one copy each of PsaA,B,C,D,E,F,I,J,K,L,M and X, and forms trimeric complexes. PSI electron transfer chain: 5 divinyl chlorophyll a, 1 divinyl chlorophyll a', 2 phylloquinones and 3 4Fe-4S clusters. PSI core antenna: 90 divinyl chlorophyll a, 22 carotenoids, 3 phospholipids and 1 galactolipid. P700 is a divinyl chlorophyll a/divinyl chlorophyll a' dimer, A0 is one or more divinyl chlorophyll a, A1 is one or both phylloquinones and FX is a shared 4Fe-4S iron-sulfur center. is required as a cofactor.

Its subcellular location is the cellular thylakoid membrane. The enzyme catalyses reduced [plastocyanin] + hnu + oxidized [2Fe-2S]-[ferredoxin] = oxidized [plastocyanin] + reduced [2Fe-2S]-[ferredoxin]. In terms of biological role, psaA and PsaB bind P700, the primary electron donor of photosystem I (PSI), as well as the electron acceptors A0, A1 and FX. PSI is a plastocyanin/cytochrome c6-ferredoxin oxidoreductase, converting photonic excitation into a charge separation, which transfers an electron from the donor P700 chlorophyll pair to the spectroscopically characterized acceptors A0, A1, FX, FA and FB in turn. Oxidized P700 is reduced on the lumenal side of the thylakoid membrane by plastocyanin or cytochrome c6. The sequence is that of Photosystem I P700 chlorophyll a apoprotein A2 from Prochlorococcus marinus (strain SARG / CCMP1375 / SS120).